The primary structure comprises 432 residues: Endosome-associated-trafficking regulator 1 (432 aa).

S18 carries the post-translational modification Phosphoserine. Positions 126–143 (DTTTSRIYPKEASRHPLG) are enriched in basic and acidic residues. The disordered stretch occupies residues 126–145 (DTTTSRIYPKEASRHPLGLE). The residue at position 148 (S148) is a Phosphoserine. The interval 174–196 (LEEDEDDGWNITYLPSAVDQTHS) is required for interaction with PTPN13. The interval 226 to 250 (PPWTLSDTDSRISPASPAGSPNADF) is disordered. A phosphoserine mark is found at S241 and S245. Coiled-coil stretches lie at residues 262-289 (LRTL…VQSF) and 315-370 (FHDL…LRSG).

Belongs to the ENTR1 family. As to quaternary structure, found in a complex with ENTR1, PTPN13 and GIT1. Interacts with PTPN13 (via the FERM domain). Interacts (via N-terminus) with GIT1 (via N- and C-terminus); this interaction is direct. Interacts with NOD2. Interacts (via N-terminus) with IFT88. Interacts with VPS35. Phosphorylated.

It is found in the cytoplasm. The protein resides in the early endosome. The protein localises to the endosome. It localises to the recycling endosome. Its subcellular location is the midbody. It is found in the cytoskeleton. The protein resides in the microtubule organizing center. The protein localises to the centrosome. It localises to the cilium basal body. In terms of biological role, may be involved in modulation of TNF response. May be involved in presentation of TNFRSF1A on the cell surface. Involved in the endosome-to-plasma membrane trafficking and recycling of SNX27-retromer-dependent cargo proteins, such as GLUT1. Involved in the regulation of cytokinesis; the function may involve PTPN13 and GIT1. Endosome-associated protein that plays a role in membrane receptor sorting, cytokinesis and ciliogenesis. Involved in the endosome-to-plasma membrane trafficking and recycling of SNX27-retromer-dependent cargo proteins, such as GLUT1. Involved in the regulation of cytokinesis; the function may involve PTPN13 and GIT1. Plays a role in the formation of cilia. Involved in cargo protein localization, such as PKD2, at primary cilia. Involved in the presentation of the tumor necrosis factor (TNF) receptor TNFRSF1A on the cell surface, and hence in the modulation of the TNF-induced apoptosis. This chain is Endosome-associated-trafficking regulator 1, found in Mus musculus (Mouse).